We begin with the raw amino-acid sequence, 453 residues long: F-box protein SKIP14 (453 aa).

An F-box; degenerate domain is found at 34–104 (RKNTGGDASS…NRQQLFAGLS (71 aa)).

As to quaternary structure, part of a SCF (ASK-cullin-F-box) protein ligase complex. Interacts with CUL1, SKP1A/ASK1 and SPK1B/ASK2.

The protein operates within protein modification; protein ubiquitination. Component of SCF(ASK-cullin-F-box) E3 ubiquitin ligase complexes, which may mediate the ubiquitination and subsequent proteasomal degradation of target proteins. The polypeptide is F-box protein SKIP14 (SKIP14) (Arabidopsis thaliana (Mouse-ear cress)).